A 381-amino-acid chain; its full sequence is NF-kappa-B inhibitor-like protein 1 (381 aa).

Positions 1-32 (MSNPSPQAPEEEASTSVCRPQSSMASVSRRHR) are disordered. Residues 14–26 (STSVCRPQSSMAS) show a composition bias toward polar residues. ANK repeat units lie at residues 64-93 (GQPP…DPAH) and 97-133 (HGDT…IKNK). 3 disordered regions span residues 129-166 (GIKN…REWR), 186-242 (DDAS…QEEE), and 257-294 (LCES…RGSL). The residue at position 150 (S150) is a Phosphoserine. Residues 150–159 (SAEEEEDEEV) are compositionally biased toward acidic residues. 2 stretches are compositionally biased toward basic and acidic residues: residues 204-228 (RLAR…RPPR) and 257-270 (LCES…EAQG).

In terms of assembly, interacts with CACTIN (via N-terminal domain); the interaction occurs in a pro-inflammatory-independent manner.

The protein resides in the nucleus. Involved in the regulation of innate immune response. Acts as negative regulator of Toll-like receptor and interferon-regulatory factor (IRF) signaling pathways. Contributes to the negative regulation of transcriptional activation of NF-kappa-B target genes in response to endogenous pro-inflammatory stimuli. The sequence is that of NF-kappa-B inhibitor-like protein 1 (Nfkbil1) from Rattus norvegicus (Rat).